The following is a 355-amino-acid chain: uncharacterized protein (355 aa).

It belongs to the TmcAL family.

This is an uncharacterized protein from Methanocaldococcus jannaschii (strain ATCC 43067 / DSM 2661 / JAL-1 / JCM 10045 / NBRC 100440) (Methanococcus jannaschii).